Here is a 227-residue protein sequence, read N- to C-terminus: UPF0758 protein lpg2489 (227 aa).

In terms of domain architecture, MPN spans 102 to 225 (RLSNTQQTYA…YSIFAENKWV (124 aa)). Zn(2+) contacts are provided by His173, His175, and Asp186. Positions 173–186 (HNHPSGLSDASQQD) match the JAMM motif motif.

This sequence belongs to the UPF0758 family.

This chain is UPF0758 protein lpg2489, found in Legionella pneumophila subsp. pneumophila (strain Philadelphia 1 / ATCC 33152 / DSM 7513).